A 269-amino-acid chain; its full sequence is Meiotically up-regulated gene 43 protein (269 aa).

Its subcellular location is the mitochondrion. Has a role in meiosis. This Schizosaccharomyces pombe (strain 972 / ATCC 24843) (Fission yeast) protein is Meiotically up-regulated gene 43 protein (mug43).